Consider the following 277-residue polypeptide: Putative protein-disulfide oxidoreductase RC0029 (277 aa).

An N-terminal signal peptide occupies residues 1–22 (MRSIFIILIFLLFLSSCSEEKA). The tract at residues 34 to 80 (EHETQNNETSKATNQEAVNSENTTESIVPANDNNQTDEVSTPASQKQ) is disordered. Positions 39 to 80 (NNETSKATNQEAVNSENTTESIVPANDNNQTDEVSTPASQKQ) are enriched in polar residues. One can recognise a Thioredoxin domain in the interval 76–265 (ASQKQKNPAI…ISTAVDKALE (190 aa)). Residues C118 and C121 are joined by a disulfide bond.

The protein belongs to the thioredoxin family. DsbA subfamily.

The protein localises to the periplasm. Its function is as follows. May be required for disulfide bond formation in some proteins. The chain is Putative protein-disulfide oxidoreductase RC0029 from Rickettsia conorii (strain ATCC VR-613 / Malish 7).